Consider the following 90-residue polypeptide: Conotoxin Vc22.1 (90 aa).

A signal peptide spans 1–18; it reads MMTRVFLAMFFLLVLTKG.

Belongs to the E superfamily. Post-translationally, contains 4 disulfide bonds. Expressed by the venom duct.

The protein resides in the secreted. The polypeptide is Conotoxin Vc22.1 (Conus victoriae (Queen Victoria cone)).